The sequence spans 295 residues: Transmembrane protein 71 (295 aa).

Transmembrane regions (helical) follow at residues 229–249 (LLQE…ISAC) and 253–273 (FMGE…VAYV).

It belongs to the TMEM71 family.

The protein localises to the membrane. This chain is Transmembrane protein 71 (TMEM71), found in Homo sapiens (Human).